Reading from the N-terminus, the 270-residue chain is NAD kinase (270 aa).

Asp45 functions as the Proton acceptor in the catalytic mechanism. NAD(+) contacts are provided by residues 45-46, 121-122, Lys147, Asp149, 160-165, and Ala184; these read DG, NE, and TAYSKS.

This sequence belongs to the NAD kinase family. The cofactor is a divalent metal cation.

It localises to the cytoplasm. It carries out the reaction NAD(+) + ATP = ADP + NADP(+) + H(+). Functionally, involved in the regulation of the intracellular balance of NAD and NADP, and is a key enzyme in the biosynthesis of NADP. Catalyzes specifically the phosphorylation on 2'-hydroxyl of the adenosine moiety of NAD to yield NADP. In Lactobacillus johnsonii (strain CNCM I-12250 / La1 / NCC 533), this protein is NAD kinase.